A 111-amino-acid chain; its full sequence is NADH-ubiquinone oxidoreductase chain 3 (111 aa).

Helical transmembrane passes span 2–22 (ILIW…GMFV), 54–74 (FFVI…LLPM), and 82–102 (PTTY…FYEW).

The protein belongs to the complex I subunit 3 family.

It is found in the mitochondrion membrane. It catalyses the reaction a ubiquinone + NADH + 5 H(+)(in) = a ubiquinol + NAD(+) + 4 H(+)(out). Core subunit of the mitochondrial membrane respiratory chain NADH dehydrogenase (Complex I) that is believed to belong to the minimal assembly required for catalysis. Complex I functions in the transfer of electrons from NADH to the respiratory chain. The immediate electron acceptor for the enzyme is believed to be ubiquinone. The chain is NADH-ubiquinone oxidoreductase chain 3 (ND3) from Artemia franciscana (Brine shrimp).